Here is a 559-residue protein sequence, read N- to C-terminus: Inositol-3-phosphate synthase 1 (559 aa).

The NAD(+) site is built by Gly-67, Gly-68, Asn-69, Asn-70, Asp-141, Ser-177, Val-178, Gln-188, Arg-191, Thr-228, Ala-229, Asn-230, Thr-231, Gly-278, Ser-279, Asp-303, Ser-306, Asn-337, Asn-338, Asp-339, and Lys-352. Ser-279 is subject to Phosphoserine. Ser-357 carries the post-translational modification Phosphoserine. Residues Gly-390, Asp-391, Asp-419, and Ser-420 each contribute to the NAD(+) site.

Belongs to the myo-inositol 1-phosphate synthase family. NAD(+) serves as cofactor.

Its subcellular location is the cytoplasm. It catalyses the reaction D-glucose 6-phosphate = 1D-myo-inositol 3-phosphate. It functions in the pathway polyol metabolism; myo-inositol biosynthesis; myo-inositol from D-glucose 6-phosphate: step 1/2. Functionally, key enzyme in myo-inositol biosynthesis pathway that catalyzes the conversion of glucose 6-phosphate to 1-myo-inositol 1-phosphate in a NAD-dependent manner. Rate-limiting enzyme in the synthesis of all inositol-containing compounds. This is Inositol-3-phosphate synthase 1 (ISYNA1) from Macaca fascicularis (Crab-eating macaque).